The following is a 504-amino-acid chain: MSKKALLMILDGWGLGDQKKDDVIFNTPTPYWDYLMNNYPHSQLQASGENVGLPDGQMGNSEVGHLNIGAGRVVYQDLVKINRACADNSILQNPEIVSAFSYAKENGKSVHFMGLTSNGGVHSSMVHLFKLCDISKEYGIDNTFIHCFMDGRDTDPKSGKGFIEELSAHCEKSAGKIASIIGRYYAMDRDKRWERVKEAYDLLVNGQGKKATDMVQAMQESYDEGVTDEFIKPIVNANCDGTIKEGDVVIFFNYRNDRAKELTVVLTQQDMPEAGMHTIPGLQYYCMTPYDASFKGVHILFDKENVANTLGEYIASKGLNQLHIAETEKYAHVTFFFNGGRETPFDNEDRILVPSPKVATYDLKPEMSAYEVKDKLVDAINENKYDFIVVNFANGDMVGHTGIYEAIEKAVVAVDACVKDVIEAAKAQDYEAIIIADHGNADRALNEDGTPNTAHSLNPVPCVYVTGNKAAKVEDGRLADVAPTILKIMGLEAPADMNGQILIK.

Mn(2+)-binding residues include Asp-11 and Ser-61. The Phosphoserine intermediate role is filled by Ser-61. Residues His-122, Arg-152–Asp-153, Arg-183, Arg-189, Arg-255–Arg-258, and Lys-329 each bind substrate. The Mn(2+) site is built by Asp-396, His-400, Asp-437, His-438, and His-455.

The protein belongs to the BPG-independent phosphoglycerate mutase family. Monomer. Requires Mn(2+) as cofactor.

It catalyses the reaction (2R)-2-phosphoglycerate = (2R)-3-phosphoglycerate. It participates in carbohydrate degradation; glycolysis; pyruvate from D-glyceraldehyde 3-phosphate: step 3/5. Functionally, catalyzes the interconversion of 2-phosphoglycerate and 3-phosphoglycerate. The protein is 2,3-bisphosphoglycerate-independent phosphoglycerate mutase of Bacteroides thetaiotaomicron (strain ATCC 29148 / DSM 2079 / JCM 5827 / CCUG 10774 / NCTC 10582 / VPI-5482 / E50).